We begin with the raw amino-acid sequence, 302 residues long: tRNA pseudouridine synthase B (302 aa).

The Nucleophile role is filled by Asp42.

This sequence belongs to the pseudouridine synthase TruB family. Type 1 subfamily.

The enzyme catalyses uridine(55) in tRNA = pseudouridine(55) in tRNA. In terms of biological role, responsible for synthesis of pseudouridine from uracil-55 in the psi GC loop of transfer RNAs. The polypeptide is tRNA pseudouridine synthase B (Leifsonia xyli subsp. xyli (strain CTCB07)).